A 182-amino-acid chain; its full sequence is UPF0397 protein VV2_1534 (182 aa).

The next 5 membrane-spanning stretches (helical) occupy residues 8–28 (VVVI…MFGI), 41–61 (AVLA…VGFI), 72–92 (WGVW…IGLF), 110–130 (FSLF…CSAF), and 146–166 (QLTI…YFIL).

The protein belongs to the UPF0397 family.

Its subcellular location is the cell membrane. The sequence is that of UPF0397 protein VV2_1534 from Vibrio vulnificus (strain CMCP6).